A 625-amino-acid polypeptide reads, in one-letter code: Keratin, type II cytoskeletal 1 (625 aa).

Residues 1-12 (MSFQCSSRSLCR) show a composition bias toward low complexity. Residues 1-27 (MSFQCSSRSLCRSGGGGGGRNFSSGSA) form a disordered region. The interval 1–178 (MSFQCSSRSL…DPQIQKVKSQ (178 aa)) is head. Arginine 12 bears the Omega-N-methylarginine mark. 2 positions are modified to phosphoserine: serine 23 and serine 26. An Omega-N-methylarginine modification is found at arginine 51. Serine 69 is subject to Phosphoserine. Positions 171–319 (QIQKVKSQER…DIDFFSTLYQ (149 aa)) form a coiled coil. The interval 179–214 (EREQIKSLNDKFASFIDKVRFLEQQNQVLQTKWELL) is coil 1A. The 314-residue stretch at 179 to 492 (EREQIKSLND…KLLEGEEIRM (314 aa)) folds into the IF rod domain. Residues 215–233 (QQVDTSTRTQNLDPFFESY) form a linker 1 region. The coil 1B stretch occupies residues 234–325 (ISNLRRQVDS…TLYQMELSQM (92 aa)). An N6,N6-dimethyllysine modification is found at lysine 275. A linker 12 region spans residues 326 to 349 (QTQISETNVVLSMDNNRTLDLDGI). Residues 350–488 (IAEVKAQYDS…ATYRKLLEGE (139 aa)) form a coil 2 region. Residues 388 to 475 (DSVKNTKMEI…ELMNTKLALD (88 aa)) are a coiled coil. Positions 489–625 (EIRMSGECTP…VSTTYSRGTN (137 aa)) are tail. 2 disordered regions span residues 496 to 525 (CTPNVSVSVSTSHTSMSGTSSRGGGRYGSG) and 560 to 625 (SGGG…RGTN). Low complexity predominate over residues 500-515 (VSVSVSTSHTSMSGTS). Gly residues-rich tracts occupy residues 516–525 (SRGGGRYGSG) and 560–606 (SGGG…GGVK). Omega-N-methylarginine occurs at positions 517, 574, and 596. The span at 613–625 (VKFVSTTYSRGTN) shows a compositional bias: polar residues.

The protein belongs to the intermediate filament family. As to quaternary structure, heterotetramer of two type I and two type II keratins. Heterodimer with KRT10. Two heterodimers of KRT1 and KRT10 form a heterotetramer. Forms a heterodimer with KRT14; the interaction is more abundant in the absence of KRT5. Interacts with ITGB1 in the presence of RACK1 and SRC, and with RACK1. Interacts with C1QBP; the association represents a cell surface kininogen receptor. Interacts with EPPK1; interaction is dependent of higher-order structure of intermediate filament. Undergoes deimination of some arginine residues (citrullination).

It is found in the cell membrane. The protein resides in the cytoplasm. Functionally, may regulate the activity of kinases such as PKC and SRC via binding to integrin beta-1 (ITB1) and the receptor of activated protein C kinase 1 (RACK1). In complex with C1QBP is a high affinity receptor for kininogen-1/HMWK. This chain is Keratin, type II cytoskeletal 1, found in Rattus norvegicus (Rat).